A 182-amino-acid polypeptide reads, in one-letter code: Endoribonuclease YbeY (182 aa).

H115, H119, and H125 together coordinate Zn(2+).

It belongs to the endoribonuclease YbeY family. Zn(2+) serves as cofactor.

The protein localises to the cytoplasm. Functionally, single strand-specific metallo-endoribonuclease involved in late-stage 70S ribosome quality control and in maturation of the 3' terminus of the 16S rRNA. This chain is Endoribonuclease YbeY, found in Bifidobacterium longum subsp. infantis (strain ATCC 15697 / DSM 20088 / JCM 1222 / NCTC 11817 / S12).